We begin with the raw amino-acid sequence, 429 residues long: Glutamate-1-semialdehyde 2,1-aminomutase (429 aa).

The residue at position 265 (Lys-265) is an N6-(pyridoxal phosphate)lysine.

This sequence belongs to the class-III pyridoxal-phosphate-dependent aminotransferase family. HemL subfamily. In terms of assembly, homodimer. Requires pyridoxal 5'-phosphate as cofactor.

The protein localises to the cytoplasm. The enzyme catalyses (S)-4-amino-5-oxopentanoate = 5-aminolevulinate. It functions in the pathway porphyrin-containing compound metabolism; protoporphyrin-IX biosynthesis; 5-aminolevulinate from L-glutamyl-tRNA(Glu): step 2/2. The protein is Glutamate-1-semialdehyde 2,1-aminomutase of Shewanella pealeana (strain ATCC 700345 / ANG-SQ1).